The following is a 203-amino-acid chain: MTLVPYVVEDTGRGERAMDIYSRLLKDRIVMIGQEITEPLANTVIAQLLFLMSEDPTKDIQIFINSPGGYITAGLAIYDTIRFLGCDVNTYCIGQAASMGALLLSAGTKGKRYALPHSRMMIHQPSGGIIGTSADIQLQAAEILTLKKHLSNILAECTGQPVEKIIEDSERDFFMGAEEAIAYGLIDKVVSSAKETKDKNIVS.

Serine 98 serves as the catalytic Nucleophile. Histidine 123 is an active-site residue.

This sequence belongs to the peptidase S14 family. As to quaternary structure, fourteen ClpP subunits assemble into 2 heptameric rings which stack back to back to give a disk-like structure with a central cavity, resembling the structure of eukaryotic proteasomes.

It is found in the cytoplasm. It catalyses the reaction Hydrolysis of proteins to small peptides in the presence of ATP and magnesium. alpha-casein is the usual test substrate. In the absence of ATP, only oligopeptides shorter than five residues are hydrolyzed (such as succinyl-Leu-Tyr-|-NHMec, and Leu-Tyr-Leu-|-Tyr-Trp, in which cleavage of the -Tyr-|-Leu- and -Tyr-|-Trp bonds also occurs).. Cleaves peptides in various proteins in a process that requires ATP hydrolysis. Has a chymotrypsin-like activity. Plays a major role in the degradation of misfolded proteins. The chain is ATP-dependent Clp protease proteolytic subunit 2 from Chlamydia muridarum (strain MoPn / Nigg).